The following is a 446-amino-acid chain: NADH-quinone oxidoreductase subunit D (446 aa).

This sequence belongs to the complex I 49 kDa subunit family. As to quaternary structure, NDH-1 is composed of 14 different subunits. Subunits NuoB, C, D, E, F, and G constitute the peripheral sector of the complex.

It is found in the cell membrane. The enzyme catalyses a quinone + NADH + 5 H(+)(in) = a quinol + NAD(+) + 4 H(+)(out). Its function is as follows. NDH-1 shuttles electrons from NADH, via FMN and iron-sulfur (Fe-S) centers, to quinones in the respiratory chain. The immediate electron acceptor for the enzyme in this species is believed to be a menaquinone. Couples the redox reaction to proton translocation (for every two electrons transferred, four hydrogen ions are translocated across the cytoplasmic membrane), and thus conserves the redox energy in a proton gradient. The polypeptide is NADH-quinone oxidoreductase subunit D (Mycobacterium sp. (strain JLS)).